We begin with the raw amino-acid sequence, 394 residues long: ORC1-type DNA replication protein 3 (394 aa).

ATP-binding positions include 66 to 70 and Tyr-207; that span reads TGKTF.

Belongs to the CDC6/cdc18 family. Monomer. Interacts with Cdc6-1, Cdc6-2, MCM and PolB1.

Its function is as follows. Involved in regulation of DNA replication. May play essential roles in origin recognition and cell cycle control of replication. Binds to DNA, with a preference for molecules that contain a bubble, a fork, or a tail. Inhibits the binding of the MCM helicase to the origin DNA and inhibits its DNA helicase activity. Also regulates the DNA polymerase and the nuclease activities of PolB1. Inhibits the DNA-binding activity of Cdc6-1 and Cdc6-2. This is ORC1-type DNA replication protein 3 (cdc6-3) from Saccharolobus solfataricus (strain ATCC 35092 / DSM 1617 / JCM 11322 / P2) (Sulfolobus solfataricus).